We begin with the raw amino-acid sequence, 329 residues long: Vacuolar protein sorting-associated protein 26B-like (329 aa).

It belongs to the VPS26 family.

It localises to the cytoplasm. The protein resides in the membrane. Its function is as follows. Probable component of the retromer complex, a complex required to retrieve lysosomal enzyme receptors (IGF2R and M6PR) from endosomes to the trans-Golgi network. The sequence is that of Vacuolar protein sorting-associated protein 26B-like (vps26bl) from Danio rerio (Zebrafish).